The following is a 357-amino-acid chain: G-protein coupled receptor 183 (357 aa).

Topologically, residues 1–27 (MANNFTTPLATSHGNNCDLYAHHSTAR) are extracellular. N-linked (GlcNAc...) asparagine glycosylation occurs at asparagine 4. A helical transmembrane segment spans residues 28–53 (VLMPLHYSLVFIIGLVGNLLALVVIV). Residues 54–73 (QNRKKINSTTLYSMNLVISD) lie on the Cytoplasmic side of the membrane. Residues 74 to 91 (ILFTTALPTRIAYYALGF) form a helical membrane-spanning segment. Arginine 83 is a 7alpha,25-dihydroxycholesterol binding site. At 92-101 (DWRIGDALCR) the chain is on the extracellular side. Cysteines 100 and 177 form a disulfide. Residues 102-123 (VTALVFYINTYAGVNFMTCLSI) traverse the membrane as a helical segment. Tyrosine 108 and tyrosine 112 together coordinate 7alpha,25-dihydroxycholesterol. The segment at 122-130 (SIDRFFAVV) is interaction with G proteins. The Cytoplasmic segment spans residues 124–145 (DRFFAVVHPLRYNKIKRIEYAK). A helical membrane pass occupies residues 146–164 (GVCLSVWILVFAQTLPLLL). The Extracellular portion of the chain corresponds to 165–188 (TPMSKEEGDKTTCMEYPNFEGTAS). A helical transmembrane segment spans residues 189–211 (LPWILLGACLLGYVLPITVILLC). Residues 212–237 (YSQICCKLFRTAKQNPLTEKSGVNKK) lie on the Cytoplasmic side of the membrane. The chain crosses the membrane as a helical span at residues 238–261 (ALNTIILIIVVFILCFTPYHVAII). 7alpha,25-dihydroxycholesterol is bound at residue tyrosine 256. Residues 262–283 (QHMIKMLCSPGALECGARHSFQ) lie on the Extracellular side of the membrane. The chain crosses the membrane as a helical span at residues 284–308 (ISLHFTVCLMNFNCCMDPFIYFFAC). Topologically, residues 309 to 357 (KGYKRKVMKMLKRQVSVSISSAVRSAPEENSREMTESQMMIHSKASNGR) are cytoplasmic. Residues serine 324 and serine 345 each carry the phosphoserine modification. The interval 336–357 (EENSREMTESQMMIHSKASNGR) is disordered. The segment covering 344-357 (ESQMMIHSKASNGR) has biased composition (polar residues).

The protein belongs to the G-protein coupled receptor 1 family. In terms of assembly, homodimer and heterodimer. Heterodimerizes with CXCR5; leading to modulate the interaction between of CXCL13 and CXCR5. In terms of tissue distribution, expressed in mature B-cells and increases in expression early after activation, before being down-regulated in germinal center B-cells. Expressed in astrocytes. Specifically expressed in CD4(+) dendritic cells but not in CD8(+) dendritic cells. Expressed in monocyte/osteoclasts precursors and mature osteoclasts.

The protein resides in the cell membrane. In terms of biological role, G-protein coupled receptor expressed in lymphocytes that acts as a chemotactic receptor for B-cells, T-cells, splenic dendritic cells, monocytes/macrophages and astrocytes. Receptor for oxysterol 7-alpha,25-dihydroxycholesterol (7-alpha,25-OHC) and other related oxysterols. Mediates cell positioning and movement of a number of cells by binding the 7-alpha,25-OHC ligand that forms a chemotactic gradient. Binding of 7-alpha,25-OHC mediates the correct localization of B-cells during humoral immune responses. Collaborates with CXCR5 to mediate B-cell migration; probably by forming a heterodimer with CXCR5 that affects the interaction between of CXCL13 and CXCR5. Guides B-cell movement along the B-cell zone-T-cell zone boundary and later to interfollicular and outer follicular regions. Its specific expression during B-cell maturation helps position B-cells appropriately for mounting T-dependent antibody responses. Also acts as a chemotactic receptor for some T-cells upon binding to 7-alpha,25-OHC ligand. Promotes follicular helper T (Tfh) cells differentiation by positioning activated T-cells at the follicle-T-zone interface, promoting contact of newly activated CD4 T-cells with activated dendritic cells and exposing them to Tfh-cell-promoting inducible costimulator (ICOS) ligand. Expression in splenic dendritic cells is required for their homeostasis, localization and ability to induce B- and T-cell responses: GPR183 acts as a chemotactic receptor in dendritic cells that mediates the accumulation of CD4(+) dendritic cells in bridging channels. Regulates migration of astrocytes and is involved in communication between astrocytes and macrophages. Promotes osteoclast precursor migration to bone surfaces. Signals constitutively through G(i)-alpha, but not G(s)-alpha or G(q)-alpha. Signals constitutively also via MAPK1/3 (ERK1/2). This chain is G-protein coupled receptor 183, found in Mus musculus (Mouse).